Here is a 793-residue protein sequence, read N- to C-terminus: Nuclear cap-binding protein subunit 1 (793 aa).

Positions 28–242 (EKKLQEVIGK…SLSAQIENLR (215 aa)) constitute an MIF4G domain.

Belongs to the NCBP1 family. In terms of assembly, component of the nuclear cap-binding complex (CBC), a heterodimer composed of ncbp-1 and ncbp-1 that interacts with m7GpppG-capped RNA.

Its subcellular location is the nucleus. In terms of biological role, component of the cap-binding complex (CBC), which binds cotranscriptionally to the 5'-cap of pre-mRNAs and is involved in various processes such as pre-mRNA splicing and RNA-mediated gene silencing (RNAi). The CBC complex is involved in miRNA-mediated RNA interference and is required for primary microRNAs (miRNAs) processing. In the CBC complex, ncbp-1 does not bind directly capped RNAs (m7GpppG-capped RNA) but is required to stabilize the movement of the N-terminal loop of ncbp-2 and lock the CBC into a high affinity cap-binding state with the cap structure. This chain is Nuclear cap-binding protein subunit 1 (ncbp-1), found in Caenorhabditis briggsae.